Reading from the N-terminus, the 165-residue chain is Peptide deformylase (165 aa).

The Fe cation site is built by Cys-88 and His-130. Residue Glu-131 is part of the active site. His-134 serves as a coordination point for Fe cation.

Belongs to the polypeptide deformylase family. It depends on Fe(2+) as a cofactor.

It carries out the reaction N-terminal N-formyl-L-methionyl-[peptide] + H2O = N-terminal L-methionyl-[peptide] + formate. Removes the formyl group from the N-terminal Met of newly synthesized proteins. Requires at least a dipeptide for an efficient rate of reaction. N-terminal L-methionine is a prerequisite for activity but the enzyme has broad specificity at other positions. This Borreliella burgdorferi (strain ATCC 35210 / DSM 4680 / CIP 102532 / B31) (Borrelia burgdorferi) protein is Peptide deformylase.